We begin with the raw amino-acid sequence, 73 residues long: MPKTFYEFLMTQRNPESYEPVASFANNAFLDSAFPKQETQFEPLSKYLEENAPYLPSMTIFDDAWQLYLAALA.

It belongs to the UPF0346 family.

The protein is UPF0346 protein LVIS_0790 of Levilactobacillus brevis (strain ATCC 367 / BCRC 12310 / CIP 105137 / JCM 1170 / LMG 11437 / NCIMB 947 / NCTC 947) (Lactobacillus brevis).